The chain runs to 499 residues: Flotillin-like protein 2 (499 aa).

A lipid anchor (S-palmitoyl cysteine) is attached at Cys-37. Positions 243 to 319 (LREEAKVKAE…LRLTEKLKAE (77 aa)) form a coiled coil.

Belongs to the band 7/mec-2 family. Flotillin subfamily. In terms of processing, may be palmitoylated.

It localises to the cell membrane. The protein resides in the membrane. It is found in the caveola. Its function is as follows. May act as a scaffolding protein within caveolar membranes, functionally participating in formation of caveolae or caveolae-like vesicles. The protein is Flotillin-like protein 2 (FLOT2) of Oryza sativa subsp. japonica (Rice).